The primary structure comprises 917 residues: Isoleucine--tRNA ligase (917 aa).

Positions 56, 67, 554, 555, 557, 558, and 585 each coordinate L-isoleucyl-5'-AMP. A 'HIGH' region motif is present at residues 57 to 67 (PYANGNLHMGH). The 'KMSKS' region motif lies at 595–599 (KMSKS). Lysine 598 contributes to the ATP binding site. The tRNA(Ile) site is built by arginine 632 and glutamine 640. The Zn(2+) site is built by cysteine 886, cysteine 889, cysteine 906, and cysteine 909.

Belongs to the class-I aminoacyl-tRNA synthetase family. IleS type 1 subfamily. As to quaternary structure, monomer. Zn(2+) serves as cofactor.

It localises to the cytoplasm. It catalyses the reaction tRNA(Ile) + L-isoleucine + ATP = L-isoleucyl-tRNA(Ile) + AMP + diphosphate. Catalyzes the attachment of isoleucine to tRNA(Ile). As IleRS can inadvertently accommodate and process structurally similar amino acids such as valine, to avoid such errors it has two additional distinct tRNA(Ile)-dependent editing activities. One activity is designated as 'pretransfer' editing and involves the hydrolysis of activated Val-AMP. The other activity is designated 'posttransfer' editing and involves deacylation of mischarged Val-tRNA(Ile). The protein is Isoleucine--tRNA ligase (ileS) of Staphylococcus aureus.